A 693-amino-acid chain; its full sequence is TBC1 domain family member 14 (693 aa).

Ser-91 carries the phosphoserine modification. Disordered stretches follow at residues 108–130 (PSCA…SSTF) and 271–304 (NAQK…RKNL). Residues 271–288 (NAQKDSKRIQKEYEDKAG) are compositionally biased toward basic and acidic residues. A Phosphoserine modification is found at Ser-295. One can recognise a Rab-GAP TBC domain in the interval 401 to 611 (GIPPSVRGKV…RIWDVFCRDG (211 aa)).

In terms of assembly, interacts with ULK1. May interact with RAB11A and RAB11B, but does not exhibit any GTPase-activating activity toward these proteins. Interacts with TRAPPC8.

It is found in the golgi apparatus. Its subcellular location is the cis-Golgi network. The protein resides in the trans-Golgi network. Its function is as follows. Plays a role in the regulation of starvation-induced autophagosome formation. Together with the TRAPPIII complex, regulates a constitutive trafficking step from peripheral recycling endosomes to the early Golgi, maintaining the cycling pool of ATG9 required for initiation of autophagy. In Homo sapiens (Human), this protein is TBC1 domain family member 14 (TBC1D14).